A 446-amino-acid chain; its full sequence is MSKKLYIKTYGCQMNVYDSVKMQDLLYPYGYEPTENIEEADVIILNTCHIREKAAEKTYSELGRIKKLQDARKKQGLNSAIIVVAGCVAQAEGEEIFTRTPYVDIVVGPQSYYNLPELISKVVRHEKHLIDLDFVEEAKFDQLPEQLYPQGASSFISVQEGCDKFCTFCVVPYTRGAEFSRNVEQVYREALKIVSSGAKEIMLLGQNVNAYHGKTSDDKVFTLADLIRHLVKIPNLERLRYTTSHPIDMTDDLISLHGLEPKLMPFLHLPVQSGSNKTLKAMNRKHDRDYYFDIIDRLRKARADIVLSSDFIVGFPGETDEDFADTLDLVRKVKYGQCYSFKYSPRPGTPGATRTDQVPEHIKSERLTILQKELAAQQLAFNESCIGSTMKVLFDRDGKFDDQIIGKTPYMQSVYIKNPNKDLLGKIIEVKITKAALNSLSGEIYR.

The 122-residue stretch at 3–124 folds into the MTTase N-terminal domain; sequence KKLYIKTYGC…LPELISKVVR (122 aa). [4Fe-4S] cluster contacts are provided by Cys-12, Cys-48, Cys-87, Cys-162, Cys-166, and Cys-169. Positions 148–380 constitute a Radical SAM core domain; it reads YPQGASSFIS…QKELAAQQLA (233 aa). Residues 383–446 form the TRAM domain; that stretch reads ESCIGSTMKV…LNSLSGEIYR (64 aa).

The protein belongs to the methylthiotransferase family. MiaB subfamily. In terms of assembly, monomer. Requires [4Fe-4S] cluster as cofactor.

It localises to the cytoplasm. The catalysed reaction is N(6)-dimethylallyladenosine(37) in tRNA + (sulfur carrier)-SH + AH2 + 2 S-adenosyl-L-methionine = 2-methylsulfanyl-N(6)-dimethylallyladenosine(37) in tRNA + (sulfur carrier)-H + 5'-deoxyadenosine + L-methionine + A + S-adenosyl-L-homocysteine + 2 H(+). In terms of biological role, catalyzes the methylthiolation of N6-(dimethylallyl)adenosine (i(6)A), leading to the formation of 2-methylthio-N6-(dimethylallyl)adenosine (ms(2)i(6)A) at position 37 in tRNAs that read codons beginning with uridine. The protein is tRNA-2-methylthio-N(6)-dimethylallyladenosine synthase of Rickettsia bellii (strain RML369-C).